A 94-amino-acid chain; its full sequence is ATP synthase subunit c (94 aa).

2 helical membrane passes run 15-35 (IGVGVILAAAGLGSAIGWGLI) and 58-78 (FIFAGLMESFPFIILAFAMWF).

This sequence belongs to the ATPase C chain family. F-type ATPases have 2 components, F(1) - the catalytic core - and F(0) - the membrane proton channel. F(1) has five subunits: alpha(3), beta(3), gamma(1), delta(1), epsilon(1). F(0) has three main subunits: a(1), b(2) and c(10-14). The alpha and beta chains form an alternating ring which encloses part of the gamma chain. F(1) is attached to F(0) by a central stalk formed by the gamma and epsilon chains, while a peripheral stalk is formed by the delta and b chains.

It is found in the cell inner membrane. Functionally, f(1)F(0) ATP synthase produces ATP from ADP in the presence of a proton or sodium gradient. F-type ATPases consist of two structural domains, F(1) containing the extramembraneous catalytic core and F(0) containing the membrane proton channel, linked together by a central stalk and a peripheral stalk. During catalysis, ATP synthesis in the catalytic domain of F(1) is coupled via a rotary mechanism of the central stalk subunits to proton translocation. Key component of the F(0) channel; it plays a direct role in translocation across the membrane. A homomeric c-ring of between 10-14 subunits forms the central stalk rotor element with the F(1) delta and epsilon subunits. The chain is ATP synthase subunit c from Hydrogenovibrio crunogenus (strain DSM 25203 / XCL-2) (Thiomicrospira crunogena).